The chain runs to 180 residues: MAEDDLCSLFFKLKVEDVTSSDELARHMKNASNERKPLIEPGENQSMDIDEEGGSVGHGLLYLYVDCPTMMLCFYGGSLPYNWMQGALLTNLPPYQHDVTLDEVNRGLRQASGFFGYADPMRSAYFAAFSFPGRVIKLNEQMELTSTKGKCLTFDLYASTQLRFELGELVRHGECKFAIG.

Hydrolyzes cytokinin glucosides thus liberating free cytokinins. The protein is Cytokinin-beta-glucosidase 1 (ROLC1) of Panax ginseng (Korean ginseng).